Reading from the N-terminus, the 347-residue chain is Holliday junction branch migration complex subunit RuvB (347 aa).

Positions 1-186 are large ATPase domain (RuvB-L); that stretch reads MKDENSISFL…FGITARFELY (186 aa). Residues leucine 25, arginine 26, glycine 67, lysine 70, threonine 71, threonine 72, 133–135, arginine 176, tyrosine 186, and arginine 223 each bind ATP; that span reads EDY. Threonine 71 contributes to the Mg(2+) binding site. The interval 187-257 is small ATPAse domain (RuvB-S); that stretch reads SEIELVEIIK…IVSIGLEMLR (71 aa). A head domain (RuvB-H) region spans residues 260–347; the sequence is GEGLDEQDRN…GLNENQRVSF (88 aa). DNA is bound by residues arginine 315 and arginine 320.

This sequence belongs to the RuvB family. As to quaternary structure, homohexamer. Forms an RuvA(8)-RuvB(12)-Holliday junction (HJ) complex. HJ DNA is sandwiched between 2 RuvA tetramers; dsDNA enters through RuvA and exits via RuvB. An RuvB hexamer assembles on each DNA strand where it exits the tetramer. Each RuvB hexamer is contacted by two RuvA subunits (via domain III) on 2 adjacent RuvB subunits; this complex drives branch migration. In the full resolvosome a probable DNA-RuvA(4)-RuvB(12)-RuvC(2) complex forms which resolves the HJ.

The protein resides in the cytoplasm. The catalysed reaction is ATP + H2O = ADP + phosphate + H(+). The RuvA-RuvB-RuvC complex processes Holliday junction (HJ) DNA during genetic recombination and DNA repair, while the RuvA-RuvB complex plays an important role in the rescue of blocked DNA replication forks via replication fork reversal (RFR). RuvA specifically binds to HJ cruciform DNA, conferring on it an open structure. The RuvB hexamer acts as an ATP-dependent pump, pulling dsDNA into and through the RuvAB complex. RuvB forms 2 homohexamers on either side of HJ DNA bound by 1 or 2 RuvA tetramers; 4 subunits per hexamer contact DNA at a time. Coordinated motions by a converter formed by DNA-disengaged RuvB subunits stimulates ATP hydrolysis and nucleotide exchange. Immobilization of the converter enables RuvB to convert the ATP-contained energy into a lever motion, pulling 2 nucleotides of DNA out of the RuvA tetramer per ATP hydrolyzed, thus driving DNA branch migration. The RuvB motors rotate together with the DNA substrate, which together with the progressing nucleotide cycle form the mechanistic basis for DNA recombination by continuous HJ branch migration. Branch migration allows RuvC to scan DNA until it finds its consensus sequence, where it cleaves and resolves cruciform DNA. In Borreliella burgdorferi (strain ATCC 35210 / DSM 4680 / CIP 102532 / B31) (Borrelia burgdorferi), this protein is Holliday junction branch migration complex subunit RuvB.